Consider the following 384-residue polypeptide: ATP phosphoribosyltransferase regulatory subunit (384 aa).

It belongs to the class-II aminoacyl-tRNA synthetase family. HisZ subfamily. Heteromultimer composed of HisG and HisZ subunits.

Its subcellular location is the cytoplasm. It participates in amino-acid biosynthesis; L-histidine biosynthesis; L-histidine from 5-phospho-alpha-D-ribose 1-diphosphate: step 1/9. Required for the first step of histidine biosynthesis. May allow the feedback regulation of ATP phosphoribosyltransferase activity by histidine. The chain is ATP phosphoribosyltransferase regulatory subunit from Paracidovorax citrulli (strain AAC00-1) (Acidovorax citrulli).